We begin with the raw amino-acid sequence, 463 residues long: ATP-dependent protease ATPase subunit HslU (463 aa).

ATP is bound by residues I19, 61–66 (GVGKTE), D277, E341, and R413.

Belongs to the ClpX chaperone family. HslU subfamily. In terms of assembly, a double ring-shaped homohexamer of HslV is capped on each side by a ring-shaped HslU homohexamer. The assembly of the HslU/HslV complex is dependent on binding of ATP.

The protein localises to the cytoplasm. Functionally, ATPase subunit of a proteasome-like degradation complex; this subunit has chaperone activity. The binding of ATP and its subsequent hydrolysis by HslU are essential for unfolding of protein substrates subsequently hydrolyzed by HslV. HslU recognizes the N-terminal part of its protein substrates and unfolds these before they are guided to HslV for hydrolysis. This chain is ATP-dependent protease ATPase subunit HslU, found in Bacillus cereus (strain ATCC 14579 / DSM 31 / CCUG 7414 / JCM 2152 / NBRC 15305 / NCIMB 9373 / NCTC 2599 / NRRL B-3711).